Here is a 383-residue protein sequence, read N- to C-terminus: UPF0425 pyridoxal phosphate-dependent protein Msp_0916 (383 aa).

Position 207 is an N6-(pyridoxal phosphate)lysine (Lys-207).

This sequence belongs to the UPF0425 family. The cofactor is pyridoxal 5'-phosphate.

The polypeptide is UPF0425 pyridoxal phosphate-dependent protein Msp_0916 (Methanosphaera stadtmanae (strain ATCC 43021 / DSM 3091 / JCM 11832 / MCB-3)).